The following is a 504-amino-acid chain: MASALSCSASDLIPLLSGGANATAAAAAAEYICGRFDTVAGKFTDAAYAIDNTYLLFSAYLVFAMQLGFAMLCAGSVRAKNTMNIMLTNVIDAAAGGLFYYLFGFAFAFGSPSNGFIGKHFFGMYDFPQPTFDYPYFLYQWTFAIAAAGITSGSIAERTQFVAYLIYSSFLTGLVYPIVSHWFWSSDGWASPARSENLLFQSGVIDFAGSGVVHMVGGIAGLWGALIEGPRIGRFGVGGKPVTLRGHSATLVVLGTFLLWFGWYGFNPGSFATIFKAYGETPGSSFYGQWSAVGRTAVTTTLAGCTAALTTLFGKRLIDGYWNVTDVCNGLLGGFAAITSGCSVVEPWAALVCGFVAAWVLMGCNRLAEKLQFDDPLEAAQLHGGCGAWGIIFTGLFAEKRYIAEIFGGDPNRPFGLLMGGGGRLLAAHVVQILVITGWVSVTMGTLFFILHKLKLLRIPAEDEIAGVDPTSHGGLAYMYTEDEIRNGIMVRRVGGDNDPNVGV.

12 helical membrane passes run 12–32 (LIPL…AEYI), 55–75 (LLFS…LCAG), 90–110 (VIDA…FAFG), 136–156 (YFLY…GSIA), 161–181 (FVAY…IVSH), 207–227 (FAGS…GALI), 251–271 (LVVL…PGSF), 292–314 (AVGR…TLFG), 318–338 (IDGY…FAAI), 344–364 (VVEP…LMGC), 377–397 (LEAA…TGLF), and 430–450 (VVQI…LFFI). Thr471 is subject to Phosphothreonine.

This sequence belongs to the ammonia transporter channel (TC 1.A.11.2) family. Specifically expressed in pollen grains and tubes.

It is found in the cell membrane. Its function is as follows. High affinity ammonium transporter in the plasma membrane. The protein is Ammonium transporter 1 member 4 (AMT1-4) of Arabidopsis thaliana (Mouse-ear cress).